A 465-amino-acid chain; its full sequence is Hexokinase-4 (465 aa).

The 445-residue stretch at 10-454 (ATKKEKVEQI…SGRGAALVSA (445 aa)) folds into the Hexokinase domain. The interval 67-203 (EGSEVGDFLS…DFEMDVVAMV (137 aa)) is hexokinase small subdomain. 78 to 83 (DLGGTN) contacts ATP. Residues 151–152 (SF), 168–169 (TK), and 204–205 (ND) each bind substrate. Residues 204 to 443 (NDTVATMISC…CEITFIESEE (240 aa)) form a hexokinase large subdomain region. Threonine 228 lines the ATP pocket. Asparagine 231, glutamate 256, and glutamate 290 together coordinate substrate. ATP-binding positions include 295-296 (GK), 332-336 (TRFVS), and 411-415 (SVYKL).

Belongs to the hexokinase family. As to quaternary structure, monomer. Interacts with MIDN; the interaction occurs preferentially at low glucose levels and results in inhibition of hexokinase activity. Interacts with GCKR; leading to sequestration in the nucleus.

Its subcellular location is the cytoplasm. It localises to the nucleus. The protein localises to the mitochondrion. It catalyses the reaction a D-hexose + ATP = a D-hexose 6-phosphate + ADP + H(+). It carries out the reaction D-fructose + ATP = D-fructose 6-phosphate + ADP + H(+). The catalysed reaction is D-glucose + ATP = D-glucose 6-phosphate + ADP + H(+). The enzyme catalyses D-mannose + ATP = D-mannose 6-phosphate + ADP + H(+). Its pathway is carbohydrate metabolism; hexose metabolism. It participates in carbohydrate degradation; glycolysis; D-glyceraldehyde 3-phosphate and glycerone phosphate from D-glucose: step 1/4. Its activity is regulated as follows. Subject to allosteric regulation. Low glucose and high fructose-6-phosphate triggers association with the inhibitor GCKR followed by sequestration in the nucleus. Functionally, catalyzes the phosphorylation of hexose, such as D-glucose, D-fructose and D-mannose, to hexose 6-phosphate (D-glucose 6-phosphate, D-fructose 6-phosphate and D-mannose 6-phosphate, respectively). Compared to other hexokinases, has a weak affinity for D-glucose, and is effective only when glucose is abundant. Mainly expressed in pancreatic beta cells and the liver and constitutes a rate-limiting step in glucose metabolism in these tissues. Since insulin secretion parallels glucose metabolism and the low glucose affinity of GCK ensures that it can change its enzymatic activity within the physiological range of glucose concentrations, GCK acts as a glucose sensor in the pancreatic beta cell. In pancreas, plays an important role in modulating insulin secretion. In liver, helps to facilitate the uptake and conversion of glucose by acting as an insulin-sensitive determinant of hepatic glucose usage. Required to provide D-glucose 6-phosphate for the synthesis of glycogen. Mediates the initial step of glycolysis by catalyzing phosphorylation of D-glucose to D-glucose 6-phosphate. This is Hexokinase-4 from Mus musculus (Mouse).